The sequence spans 418 residues: UDP-N-acetylglucosamine 1-carboxyvinyltransferase (418 aa).

Residue 22-23 coordinates phosphoenolpyruvate; sequence KN. R92 contacts UDP-N-acetyl-alpha-D-glucosamine. The active-site Proton donor is C116. C116 carries the 2-(S-cysteinyl)pyruvic acid O-phosphothioketal modification. UDP-N-acetyl-alpha-D-glucosamine-binding positions include 121-125, D305, and L327; that span reads RPIDL.

The protein belongs to the EPSP synthase family. MurA subfamily.

The protein resides in the cytoplasm. It catalyses the reaction phosphoenolpyruvate + UDP-N-acetyl-alpha-D-glucosamine = UDP-N-acetyl-3-O-(1-carboxyvinyl)-alpha-D-glucosamine + phosphate. The protein operates within cell wall biogenesis; peptidoglycan biosynthesis. Cell wall formation. Adds enolpyruvyl to UDP-N-acetylglucosamine. This Campylobacter jejuni subsp. jejuni serotype O:6 (strain 81116 / NCTC 11828) protein is UDP-N-acetylglucosamine 1-carboxyvinyltransferase.